The primary structure comprises 202 residues: Small ribosomal subunit protein uS4 (202 aa).

The segment at 18–44 is disordered; it reads LPGLTRKSARREYPPGQHGQGRRKRSE. Residues 90-152 form the S4 RNA-binding domain; it reads MRLDNTVFRL…DRSRKLIEAN (63 aa).

It belongs to the universal ribosomal protein uS4 family. In terms of assembly, part of the 30S ribosomal subunit. Contacts protein S5. The interaction surface between S4 and S5 is involved in control of translational fidelity.

One of the primary rRNA binding proteins, it binds directly to 16S rRNA where it nucleates assembly of the body of the 30S subunit. Its function is as follows. With S5 and S12 plays an important role in translational accuracy. The chain is Small ribosomal subunit protein uS4 from Picosynechococcus sp. (strain ATCC 27264 / PCC 7002 / PR-6) (Agmenellum quadruplicatum).